We begin with the raw amino-acid sequence, 145 residues long: Protein ImpA (145 aa).

Active-site for autocatalytic cleavage activity residues include S64 and K101.

It belongs to the peptidase S24 family.

Involved in UV protection and mutation. The chain is Protein ImpA from Escherichia coli.